Reading from the N-terminus, the 390-residue chain is METFLFTSESVNEGHPDKLCDQVSDAILDACLEQDPESKVACETCTKTNMVMVFGEITTKATVNYEKIVRDTCRGIGFTSPDVGLDADNCKVLVNIEQQSPDIAQGVHGHLTKKPEEIGAGDQGHMFGYATDETPELMPLTHVLATKLGAKLTEVRKNKTCPWLRPDGKTQVTVEYRNEGGAMVPIRVHTVLISTQHDETVTNEQIAQDLKEHVIKPVIPAQYLDDQTIFHLNPSGRFVIGGPHGDAGLTGRKIIIDTYGGWGAHGGGAFSGKDPTKVDRSGAYIVRQAAKSVVASGLARRCLVQVSYAIGVAEPLSVFVDTFKTGKIPDKDILALIKENFDFRPGMIAINLDLKRGGNFRYQKTAALGHLGRDDPDFTWETVKILKPKA.

Glu-9 contacts Mg(2+). Position 15 (His-15) interacts with ATP. Glu-43 is a binding site for K(+). L-methionine-binding residues include Glu-56 and Gln-99. ATP contacts are provided by residues 167 to 169 (DGK), 235 to 238 (SGRF), Asp-246, 252 to 253 (RK), Ala-269, Lys-273, and Lys-277. An L-methionine-binding site is contributed by Asp-246. Lys-277 provides a ligand contact to L-methionine.

This sequence belongs to the AdoMet synthase family. In terms of assembly, homotetramer. Requires Mn(2+) as cofactor. The cofactor is Mg(2+). It depends on Co(2+) as a cofactor. K(+) is required as a cofactor. NH4(+) serves as cofactor. Mostly expressed in roots, and, to a lower extent, in hypocotyls and cotyledons.

It localises to the cytoplasm. It carries out the reaction L-methionine + ATP + H2O = S-adenosyl-L-methionine + phosphate + diphosphate. Its pathway is amino-acid biosynthesis; S-adenosyl-L-methionine biosynthesis; S-adenosyl-L-methionine from L-methionine: step 1/1. Its activity is regulated as follows. Inhibited by products of SAMS reaction (SAM, Pi, PPi), substrate analogs (cycloleucine and ethionine), and alternative nucleotides (GTP, CTP and ADP). Strongly repressed by PPPi. Catalyzes the formation of S-adenosylmethionine from methionine and ATP. The reaction comprises two steps that are both catalyzed by the same enzyme: formation of S-adenosylmethionine (AdoMet) and triphosphate, and subsequent hydrolysis of the triphosphate. In Catharanthus roseus (Madagascar periwinkle), this protein is S-adenosylmethionine synthase 3 (SAMS3).